The primary structure comprises 217 residues: Ribosomal RNA small subunit methyltransferase G (217 aa).

Residues G78, F83, 129-130 (GE), and R146 contribute to the S-adenosyl-L-methionine site.

Belongs to the methyltransferase superfamily. RNA methyltransferase RsmG family.

The protein resides in the cytoplasm. The catalysed reaction is guanosine(527) in 16S rRNA + S-adenosyl-L-methionine = N(7)-methylguanosine(527) in 16S rRNA + S-adenosyl-L-homocysteine. Functionally, specifically methylates the N7 position of guanine in position 527 of 16S rRNA. The sequence is that of Ribosomal RNA small subunit methyltransferase G from Geobacter sulfurreducens (strain ATCC 51573 / DSM 12127 / PCA).